Consider the following 183-residue polypeptide: Regulatory protein RecX (183 aa).

The span at methionine 1–serine 12 shows a compositional bias: polar residues. The disordered stretch occupies residues methionine 1 to alanine 26.

The protein belongs to the RecX family.

Its subcellular location is the cytoplasm. Functionally, modulates RecA activity. This is Regulatory protein RecX from Mycobacterium sp. (strain JLS).